A 554-amino-acid chain; its full sequence is Glutamine--tRNA ligase (554 aa).

The 'HIGH' region signature appears at 33-43 (PEPNGYLHIGH). ATP contacts are provided by residues 34-36 (EPN) and 40-46 (HIGHAKS). L-glutamine contacts are provided by Asp66 and Tyr210. Residues Thr229, 259–260 (RL), and 267–269 (MSK) contribute to the ATP site. The 'KMSKS' region motif lies at 266-270 (VMSKR).

It belongs to the class-I aminoacyl-tRNA synthetase family. As to quaternary structure, monomer.

It is found in the cytoplasm. It catalyses the reaction tRNA(Gln) + L-glutamine + ATP = L-glutaminyl-tRNA(Gln) + AMP + diphosphate. In Clostridioides difficile (strain 630) (Peptoclostridium difficile), this protein is Glutamine--tRNA ligase.